Here is a 1228-residue protein sequence, read N- to C-terminus: MDRKKAVKLATASAIAASAFVAANPNASEAATDVATVVSQAKAQFKKAYYTYSHTVTETGEFPNINDVYAEYNKAKKRYRDAVALVNKAGGAKKDAYLADLQKEYETYVFKANPKSGEARVATYIDAYNYATKLDEMRQELEAAVQAKDLEKAEQYYHKIPYEIKTRTVILDRVYGKTTRDLLRSTFKAKAQELRDSLIYDITVAMKAREVQDAVKAGNLDKAKAAVDQINQYLPKVTDAFKTELTEVAKKALDADEAALTPKVESVSAINTQNKAVELTAVPVNGTLKLQLSAAANEDTVNVNTVRIYKVDGNIPFALNTADVSLSTDGKTITVDASTPFENNTEYKVVVKGIKDKNGKEFKEDAFTFKLRNDAVVTQVFGTNVTNNTSVNLAAGTFDTDDTLTVVFDKLLAPETVNSSNVTITDVETGKRIPVIASTSGSTITITLKEALVTGKQYKLAINNVKTLTGYNAEAYELVFTANASAPTVATAPTTLGGTTLSTGSLTTNVWGKLAGGVNEAGTYYPGLQFTTTFATKLDESTLADNFVLVEKESGTVVASELKYNADAKMVTLVPKADLKENTIYQIKIKKGLKSDKGIELGTVNEKTYEFKTQDLTAPTVISVTSKNGDAGLKVTEAQEFTVKFSENLNTFNATTVSGSTITYGQVAVVKAGANLSALTASDIIPASVEAVTGQDGTYKVKVAANQLERNQGYKLVVFGKGATAPVKDAANANTLATNYIYTFTTEGQDVTAPTVTKVFKGDSLKDADAVTTLTNVDAGQKFTIQFSEELKTSSGSLVGGKVTVEKLTNNGWVDAGTGTTVSVAPKTDANGKVTAAVVTLTGLDNNDKDAKLRLVVDKSSTDGIADVAGNVIKEKDILIRYNSWRHTVASVKAAADKDGQNASAAFPTSTAIDTTKSLLVEFNETDLAEVKPENIVVKDAAGNAVAGTVTALDGSTNKFVFTPSQELKAGTVYSVTIDGVRDKVGNTISKYITSFKTVSANPTLSSISIADGAVNVDRSKTITIEFSDSVPNPTITLKKADGTSFTNYTLVNVNNENKTYKIVFHKGVTLDEFTQYELAVSKDFQTGTDIDSKVTFITGSVATDEVKPALVGVGSWNGTSYTQDAAATRLRSVADFVAEPVALQFSEGIDLTNATVTVTNITDDKTVEVISKESVDADHDAGATKETLVINTVTPLVLDNSKTYKIVVSGVKDAAGNVADTITFYIK.

Residues 1–30 form the signal peptide; sequence MDRKKAVKLATASAIAASAFVAANPNASEA.

It localises to the secreted. The protein resides in the cell wall. The protein localises to the S-layer. The S-layer is a paracrystalline mono-layered assembly of proteins which coat the surface of bacteria. In Geobacillus stearothermophilus (Bacillus stearothermophilus), this protein is S-layer protein (sbsA).